Consider the following 246-residue polypeptide: Probable septum site-determining protein MinC (246 aa).

Belongs to the MinC family. Interacts with MinD and FtsZ.

In terms of biological role, cell division inhibitor that blocks the formation of polar Z ring septums. Rapidly oscillates between the poles of the cell to destabilize FtsZ filaments that have formed before they mature into polar Z rings. Prevents FtsZ polymerization. This is Probable septum site-determining protein MinC from Lachnospira eligens (strain ATCC 27750 / DSM 3376 / VPI C15-48 / C15-B4) (Eubacterium eligens).